A 631-amino-acid polypeptide reads, in one-letter code: MBT domain-containing protein 1 (631 aa).

The tract at residues 1-31 is disordered; that stretch reads MFDGYDSCSEDTSSSSSSEESEEEVAPLPSN. An FCS-type zinc finger spans residues 45 to 80; the sequence is PDGKSGMATCEMCGMVGVRDAFYSKTKRFCSVSCSR. Residues cysteine 54, cysteine 57, cysteine 74, and cysteine 78 each coordinate Zn(2+). An N6-acetyllysine modification is found at lysine 115. MBT repeat units lie at residues 144 to 248, 256 to 353, 354 to 459, and 467 to 563; these read FSWG…LVPP, TNWK…IGHR, FKRS…LTPP, and FKWF…LQPP. The disordered stretch occupies residues 563–631; sequence PASQSSRESQ…SATVYIKQEP (69 aa). A compositionally biased stretch (low complexity) spans 564–576; that stretch reads ASQSSRESQSASS. Residues 577-593 are compositionally biased toward basic residues; it reads KQKKKAKSQQYKGHKKM.

Monomer. Component of the NuA4 histone acetyltransferase complex. Interacts with EPC1; interaction is direct and promotes recruitment of MBTD1 into the NuA4 histone acetyltransferase complex.

It is found in the nucleus. The protein localises to the chromosome. Functionally, chromatin reader component of the NuA4 histone acetyltransferase complex, a multiprotein complex involved in transcriptional activation of select genes principally by acetylation of nucleosomal histones H4 and H2A. The NuA4 complex plays a direct role in repair of DNA double-strand breaks (DSBs) by promoting homologous recombination (HR). MBTD1 specifically recognizes and binds monomethylated and dimethylated 'Lys-20' on histone H4 (H4K20me1 and H4K20me2, respectively). In the NuA4 complex, MBTD1 promotes recruitment of the complex to H4K20me marks by competing with TP53BP1 for binding to H4K20me. Following recruitment to H4K20me at DNA breaks, the NuA4 complex catalyzes acetylation of 'Lys-15' on histone H2A (H2AK15), blocking the ubiquitination mark required for TP53BP1 localization at DNA breaks, thereby promoting homologous recombination (HR). The protein is MBT domain-containing protein 1 of Mus musculus (Mouse).